We begin with the raw amino-acid sequence, 210 residues long: MALELLTPFTKVELEEEKKESNRKQIGILGGNFNPIHNAHLVVADQVRQQLGLDQVLLMPECKPPHVDAKETIDEKHRLCMLELAIEDVEGLAIETCELERQGISYTYDTMLYLTEQHPDVDYYFIIGADMVDYLPKWHRIDELVKLVQFVGVQRPKYKAGTSYPVIWVDLPLMDISSSMIRDFIKKGRQPNYLLPKRVLDYITQEGLYQ.

It belongs to the NadD family.

The enzyme catalyses nicotinate beta-D-ribonucleotide + ATP + H(+) = deamido-NAD(+) + diphosphate. It functions in the pathway cofactor biosynthesis; NAD(+) biosynthesis; deamido-NAD(+) from nicotinate D-ribonucleotide: step 1/1. Catalyzes the reversible adenylation of nicotinate mononucleotide (NaMN) to nicotinic acid adenine dinucleotide (NaAD). The chain is Probable nicotinate-nucleotide adenylyltransferase from Streptococcus pyogenes serotype M6 (strain ATCC BAA-946 / MGAS10394).